Reading from the N-terminus, the 344-residue chain is Transmembrane protein 268 (344 aa).

A disordered region spans residues methionine 1–proline 31. Low complexity predominate over residues glycine 14–proline 27. The next 2 helical transmembrane spans lie at alanine 106 to phenylalanine 126 and alanine 133 to phenylalanine 153. The interval threonine 244–threonine 266 is disordered. Residues glutamate 247–leucine 259 show a composition bias toward low complexity.

In terms of assembly, interacts with ITGAM; this interaction inhibits ITGAM degradation via the endosome-lysosome pathway. Interacts with ITGB4; this interaction prevents ITGB4 degradation.

It localises to the cell membrane. In terms of biological role, stabilizes cell surface expression of ITGAM and participates in the adhesion and migration of phagocytes during bacterial clearance. The sequence is that of Transmembrane protein 268 (TMEM268) from Bos taurus (Bovine).